Consider the following 593-residue polypeptide: NADH-quinone oxidoreductase subunit C/D (593 aa).

Residues Met1–Gln184 form an NADH dehydrogenase I subunit C region. The interval Asp208–Arg593 is NADH dehydrogenase I subunit D.

In the N-terminal section; belongs to the complex I 30 kDa subunit family. It in the C-terminal section; belongs to the complex I 49 kDa subunit family. As to quaternary structure, NDH-1 is composed of 13 different subunits. Subunits NuoB, CD, E, F, and G constitute the peripheral sector of the complex.

It localises to the cell inner membrane. The catalysed reaction is a quinone + NADH + 5 H(+)(in) = a quinol + NAD(+) + 4 H(+)(out). Its function is as follows. NDH-1 shuttles electrons from NADH, via FMN and iron-sulfur (Fe-S) centers, to quinones in the respiratory chain. The immediate electron acceptor for the enzyme in this species is believed to be ubiquinone. Couples the redox reaction to proton translocation (for every two electrons transferred, four hydrogen ions are translocated across the cytoplasmic membrane), and thus conserves the redox energy in a proton gradient. This chain is NADH-quinone oxidoreductase subunit C/D, found in Ectopseudomonas mendocina (strain ymp) (Pseudomonas mendocina).